We begin with the raw amino-acid sequence, 229 residues long: Protein GLC8 (229 aa).

3 disordered regions span residues 1–21 (MGGI…QQDP), 35–62 (TQKN…EIIG), and 107–229 (QFQD…TKEP). Ser-12 carries the post-translational modification Phosphoserine. Over residues 107–117 (QFQDIHIDEPK) the composition is skewed to basic and acidic residues. Thr-118 is modified (phosphothreonine; by PHO85). Ser-158 is subject to Phosphoserine. The span at 164–173 (FEIKENKQPD) shows a compositional bias: basic and acidic residues. Residues 175 to 184 (ETNDENDEDS) are compositionally biased toward acidic residues. The residue at position 184 (Ser-184) is a Phosphoserine. Residues 185 to 196 (PEARHKKFEEMR) are compositionally biased toward basic and acidic residues.

Phosphorylated by the cyclin-CDKs PCL6-PHO85 and PCL7-PHO85. Phosphorylation of Thr-118 inactivates GLC8.

Its function is as follows. Modulator of GLC7 type-1 protein phosphatase. The polypeptide is Protein GLC8 (GLC8) (Saccharomyces cerevisiae (strain ATCC 204508 / S288c) (Baker's yeast)).